The primary structure comprises 700 residues: Methionine--tRNA ligase (700 aa).

A 'HIGH' region motif is present at residues 14 to 24 (PYANGPVHLGH). Zn(2+)-binding residues include Cys146, Cys149, Cys159, and Cys162. The 'KMSKS' region motif lies at 344–348 (KFSKS). Lys347 lines the ATP pocket. Residues 599–700 (DFLKVDLRVA…GEEINGRQIQ (102 aa)) enclose the tRNA-binding domain.

It belongs to the class-I aminoacyl-tRNA synthetase family. MetG type 1 subfamily. Homodimer. Requires Zn(2+) as cofactor.

It localises to the cytoplasm. It carries out the reaction tRNA(Met) + L-methionine + ATP = L-methionyl-tRNA(Met) + AMP + diphosphate. Functionally, is required not only for elongation of protein synthesis but also for the initiation of all mRNA translation through initiator tRNA(fMet) aminoacylation. This is Methionine--tRNA ligase from Pelodictyon phaeoclathratiforme (strain DSM 5477 / BU-1).